Here is a 161-residue protein sequence, read N- to C-terminus: S-protein homolog 2 (161 aa).

An N-terminal signal peptide occupies residues 1–24 (MDIPKQYLSLFILIIFITTKLSQA). 3 N-linked (GlcNAc...) asparagine glycosylation sites follow: Asn75, Asn106, and Asn157.

Belongs to the plant self-incompatibility (S1) protein family.

It localises to the secreted. The chain is S-protein homolog 2 from Arabidopsis thaliana (Mouse-ear cress).